Here is a 1104-residue protein sequence, read N- to C-terminus: Inhibitory regulator protein BUD2/CLA2 (1104 aa).

An N-acetylserine modification is found at serine 2. The region spanning arginine 316–isoleucine 444 is the C2 domain. One can recognise a Ras-GAP domain in the interval alanine 536 to methionine 753. Phosphoserine is present on serine 854. The interval asparagine 1027–serine 1104 is disordered. Polar residues-rich tracts occupy residues lysine 1029–asparagine 1043 and leucine 1052–lysine 1069. The segment covering lysine 1090–serine 1104 has biased composition (basic residues).

Its function is as follows. Stimulates the GTPase activity of BUD1/RSR1. Participates in the regulation of bud-site selection. The polypeptide is Inhibitory regulator protein BUD2/CLA2 (BUD2) (Saccharomyces cerevisiae (strain ATCC 204508 / S288c) (Baker's yeast)).